The primary structure comprises 373 residues: tRNA-specific 2-thiouridylase MnmA (373 aa).

Residues 12–19 (GMSGGVDS) and Met-38 each bind ATP. Positions 98 to 100 (NPD) are interaction with target base in tRNA. Cys-103 functions as the Nucleophile in the catalytic mechanism. A disulfide bond links Cys-103 and Cys-200. Residue Gly-127 coordinates ATP. The interval 150–152 (KDQ) is interaction with tRNA. The active-site Cysteine persulfide intermediate is the Cys-200. The interval 312–313 (RY) is interaction with tRNA.

The protein belongs to the MnmA/TRMU family.

The protein localises to the cytoplasm. It carries out the reaction S-sulfanyl-L-cysteinyl-[protein] + uridine(34) in tRNA + AH2 + ATP = 2-thiouridine(34) in tRNA + L-cysteinyl-[protein] + A + AMP + diphosphate + H(+). Catalyzes the 2-thiolation of uridine at the wobble position (U34) of tRNA, leading to the formation of s(2)U34. This is tRNA-specific 2-thiouridylase MnmA from Streptococcus uberis (strain ATCC BAA-854 / 0140J).